The chain runs to 267 residues: Putative hydro-lyase RALTA_B1245 (267 aa).

It belongs to the D-glutamate cyclase family.

The polypeptide is Putative hydro-lyase RALTA_B1245 (Cupriavidus taiwanensis (strain DSM 17343 / BCRC 17206 / CCUG 44338 / CIP 107171 / LMG 19424 / R1) (Ralstonia taiwanensis (strain LMG 19424))).